A 146-amino-acid polypeptide reads, in one-letter code: Probable NADH dehydrogenase [ubiquinone] 1 alpha subcomplex subunit 12 (146 aa).

It belongs to the complex I NDUFA12 subunit family. Complex I is composed of 45 different subunits.

Its subcellular location is the mitochondrion inner membrane. Its function is as follows. Accessory subunit of the mitochondrial membrane respiratory chain NADH dehydrogenase (Complex I), that is believed not to be involved in catalysis. Complex I functions in the transfer of electrons from NADH to the respiratory chain. The immediate electron acceptor for the enzyme is believed to be ubiquinone. The sequence is that of Probable NADH dehydrogenase [ubiquinone] 1 alpha subcomplex subunit 12 from Caenorhabditis elegans.